We begin with the raw amino-acid sequence, 506 residues long: Histidine ammonia-lyase (506 aa).

A cross-link (5-imidazolinone (Ala-Gly)) is located at residues 143-145 (ASG). The residue at position 144 (S144) is a 2,3-didehydroalanine (Ser).

The protein belongs to the PAL/histidase family. In terms of processing, contains an active site 4-methylidene-imidazol-5-one (MIO), which is formed autocatalytically by cyclization and dehydration of residues Ala-Ser-Gly.

It is found in the cytoplasm. It catalyses the reaction L-histidine = trans-urocanate + NH4(+). The protein operates within amino-acid degradation; L-histidine degradation into L-glutamate; N-formimidoyl-L-glutamate from L-histidine: step 1/3. In Salmonella typhimurium (strain LT2 / SGSC1412 / ATCC 700720), this protein is Histidine ammonia-lyase.